A 278-amino-acid chain; its full sequence is Putative transposase for insertion sequence element IS986/IS6110 (278 aa).

Residues 101–268 (GPPAPNRLWV…VPPVELEAAY (168 aa)) form the Integrase catalytic domain.

In terms of biological role, involved in the transposition of the insertion sequence. The sequence is that of Putative transposase for insertion sequence element IS986/IS6110 from Mycobacterium bovis (strain ATCC BAA-935 / AF2122/97).